Here is a 794-residue protein sequence, read N- to C-terminus: Ubiquitin carboxyl-terminal hydrolase 10 (794 aa).

At A2 the chain carries N-acetylalanine. Positions 2–99 (ALHNPQYIFG…ILGCPTSKKT (98 aa)) are interaction with p53/TP53. The tract at residues 6–21 (PQYIFGDFSPDEFNQF) is G3BP1-binding. T24 and T99 each carry phosphothreonine. Residues 123-164 (ESSSNAEAETLENDSGAGGLGQRERKKKKKRPPGYYSYLKDG) are disordered. Residues S209, S224, and S316 each carry the phosphoserine modification. The interval 303 to 326 (ESADLDPAKPESQSPPAESALSVS) is disordered. The span at 313–326 (ESQSPPAESALSVS) shows a compositional bias: polar residues. The residue at position 332 (S332) is a Phosphoserine; by ATM. A phosphoserine mark is found at S361 and S366. One can recognise a USP domain in the interval 411–791 (RGLINKGNWC…TAYLLYYRRV (381 aa)). Catalysis depends on C420, which acts as the Nucleophile. Position 543 is a phosphoserine (S543). The segment at 546–588 (HEKHSVSNGPGSHLIEDEELEDTGEGSEDEWEQVGPKNKTSVT) is disordered. Residues 561 to 577 (EDEELEDTGEGSEDEWE) are compositionally biased toward acidic residues. T568 carries the phosphothreonine modification. Position 572 is a phosphoserine (S572). H745 functions as the Proton acceptor in the catalytic mechanism.

The protein belongs to the peptidase C19 family. USP10 subfamily. Found in a deubiquitination complex with TANK, USP10 and ZC3H12A; this complex inhibits genotoxic stress- or interleukin-1-beta (IL1B)-mediated NF-kappa-B activation by promoting IKBKG or TRAF6 deubiquitination. Interacts with IKBKG; this interaction increases in response to DNA damage. Interacts with TANK; this interaction increases in response to DNA damage. Interacts with TRAF6; this interaction increases in response to DNA damage. Interacts with ZC3H12A; this interaction increases in response to DNA damage. Interacts with G3BP1 (via NTF2 domain) and G3BP2 (via NTF2 domain); inhibiting stress granule formation. Phosphorylated by ATM following DNA damage, leading to stabilization and translocation it to the nucleus. Post-translationally, ubiquitinated. Deubiquitinated by USP13.

The protein resides in the cytoplasm. It localises to the nucleus. The protein localises to the early endosome. It catalyses the reaction Thiol-dependent hydrolysis of ester, thioester, amide, peptide and isopeptide bonds formed by the C-terminal Gly of ubiquitin (a 76-residue protein attached to proteins as an intracellular targeting signal).. With respect to regulation, specifically inhibited by spautin-1 (specific and potent autophagy inhibitor-1), a derivative of MBCQ that binds to USP10 and inhibits deubiquitinase activity. Regulated by PIK3C3/VPS34-containing complexes. Its function is as follows. Hydrolase that can remove conjugated ubiquitin from target proteins such as p53/TP53, RPS2/us5, RPS3/us3, RPS10/eS10, BECN1, SNX3 and CFTR. Acts as an essential regulator of p53/TP53 stability: in unstressed cells, specifically deubiquitinates p53/TP53 in the cytoplasm, leading to counteract MDM2 action and stabilize p53/TP53. Following DNA damage, translocates to the nucleus and deubiquitinates p53/TP53, leading to regulate the p53/TP53-dependent DNA damage response. Component of a regulatory loop that controls autophagy and p53/TP53 levels: mediates deubiquitination of BECN1, a key regulator of autophagy, leading to stabilize the PIK3C3/VPS34-containing complexes. In turn, PIK3C3/VPS34-containing complexes regulate USP10 stability, suggesting the existence of a regulatory system by which PIK3C3/VPS34-containing complexes regulate p53/TP53 protein levels via USP10 and USP13. Does not deubiquitinate MDM2. Plays a key role in 40S ribosome subunit recycling when a ribosome has stalled during translation: acts both by inhibiting formation of stress granules, which store stalled translation pre-initiation complexes, and mediating deubiquitination of 40S ribosome subunits. Acts as a negative regulator of stress granules formation by lowering G3BP1 and G3BP2 valence, thereby preventing G3BP1 and G3BP2 ability to undergo liquid-liquid phase separation (LLPS) and assembly of stress granules. Promotes 40S ribosome subunit recycling following ribosome dissociation in response to ribosome stalling by mediating deubiquitination of 40S ribosomal proteins RPS2/us5, RPS3/us3 and RPS10/eS10, thereby preventing their degradation by the proteasome. Part of a ribosome quality control that takes place when ribosomes have stalled during translation initiation (iRQC): USP10 acts by removing monoubiquitination of RPS2/us5 and RPS3/us3, promoting 40S ribosomal subunit recycling. Deubiquitinates CFTR in early endosomes, enhancing its endocytic recycling. Involved in a TANK-dependent negative feedback response to attenuate NF-kappa-B activation via deubiquitinating IKBKG or TRAF6 in response to interleukin-1-beta (IL1B) stimulation or upon DNA damage. Deubiquitinates TBX21 leading to its stabilization. Plays a negative role in the RLR signaling pathway upon RNA virus infection by blocking the RIGI-mediated MAVS activation. Mechanistically, removes the unanchored 'Lys-63'-linked polyubiquitin chains of MAVS to inhibit its aggregation, essential for its activation. The protein is Ubiquitin carboxyl-terminal hydrolase 10 (Usp10) of Rattus norvegicus (Rat).